Consider the following 131-residue polypeptide: Peptide methionine sulfoxide reductase MsrB (131 aa).

In terms of domain architecture, MsrB spans 8–130 (LDEWRSMLDP…NSVCIDLRPR (123 aa)). The Zn(2+) site is built by cysteine 47, cysteine 50, cysteine 96, and cysteine 99. Cysteine 119 serves as the catalytic Nucleophile.

This sequence belongs to the MsrB Met sulfoxide reductase family. Zn(2+) is required as a cofactor.

It carries out the reaction L-methionyl-[protein] + [thioredoxin]-disulfide + H2O = L-methionyl-(R)-S-oxide-[protein] + [thioredoxin]-dithiol. The protein is Peptide methionine sulfoxide reductase MsrB of Pseudomonas putida (strain ATCC 700007 / DSM 6899 / JCM 31910 / BCRC 17059 / LMG 24140 / F1).